The sequence spans 246 residues: Small ribosomal subunit protein uS3A (246 aa).

Residues 21 to 92 (LNEFLTRELA…SVELYAEKVA (72 aa)) form the KH type-2 domain. The disordered stretch occupies residues 215–246 (DEIVPTTPISEQKAAKPDQPQPPAMPQPVATA).

Belongs to the universal ribosomal protein uS3 family.

Its subcellular location is the cytoplasm. The protein resides in the nucleus. It is found in the nucleolus. It localises to the mitochondrion inner membrane. The protein localises to the cytoskeleton. Its subcellular location is the spindle. The enzyme catalyses 2'-deoxyribonucleotide-(2'-deoxyribose 5'-phosphate)-2'-deoxyribonucleotide-DNA = a 3'-end 2'-deoxyribonucleotide-(2,3-dehydro-2,3-deoxyribose 5'-phosphate)-DNA + a 5'-end 5'-phospho-2'-deoxyribonucleoside-DNA + H(+). Functionally, component of the small ribosomal subunit. The ribosome is a large ribonucleoprotein complex responsible for the synthesis of proteins in the cell. Has endonuclease activity and plays a role in repair of damaged DNA. Also involved in other processes including regulation of transcription, translation of its cognate mRNA, spindle formation and chromosome movement during mitosis, and apoptosis. The chain is Small ribosomal subunit protein uS3A (rps3-a) from Xenopus laevis (African clawed frog).